Here is a 151-residue protein sequence, read N- to C-terminus: Large ribosomal subunit protein uL15 (151 aa).

The segment at 1-62 (MVKLNELFPK…GGQMPLYRRV (62 aa)) is disordered. A compositionally biased stretch (basic residues) spans 11–20 (HGSRKAKRRI).

The protein belongs to the universal ribosomal protein uL15 family. Part of the 50S ribosomal subunit.

Binds to the 23S rRNA. This chain is Large ribosomal subunit protein uL15, found in Elusimicrobium minutum (strain Pei191).